A 331-amino-acid chain; its full sequence is tRNA (guanine-N(1)-)-methyltransferase (331 aa).

Composition is skewed to low complexity over residues 77 to 99 and 107 to 134; these read GSDTTARSGSTAATSASAQQATR and AQPGDAGQGTAAPDYARTGGTPGAGRAA. The segment at 77–137 is disordered; that stretch reads GSDTTARSGS…PGAGRAASSR (61 aa). Residues G169 and 193–198 each bind S-adenosyl-L-methionine; that span reads LGDYVL. The interval 312-331 is disordered; it reads WQRCSPAPSEQAPEGARDMA.

Belongs to the RNA methyltransferase TrmD family. In terms of assembly, homodimer.

The protein localises to the cytoplasm. The catalysed reaction is guanosine(37) in tRNA + S-adenosyl-L-methionine = N(1)-methylguanosine(37) in tRNA + S-adenosyl-L-homocysteine + H(+). Its function is as follows. Specifically methylates guanosine-37 in various tRNAs. This Kocuria rhizophila (strain ATCC 9341 / DSM 348 / NBRC 103217 / DC2201) protein is tRNA (guanine-N(1)-)-methyltransferase.